We begin with the raw amino-acid sequence, 224 residues long: MRTFALVCAAGSGKRFGGSTPKQFLFLEDKMVIEYSLCVFENSPFIDGVVILIPNGYKNIGDVLKEKYKKVLFWDYGEDERAKTVKKGLELIKGMCDFVAIHDAVRPFIDLELIEKLILEVKSSFAVAPAVSAKDTVKYVVDGYVQNTIPRENVYLVQTPQVFKFDLIYGAYEKFEDTCFTDDLQYVEALGVKPKIVENSSLNFKITTKEDMIFAKAIVEQFLK.

It belongs to the IspD/TarI cytidylyltransferase family. IspD subfamily.

It carries out the reaction 2-C-methyl-D-erythritol 4-phosphate + CTP + H(+) = 4-CDP-2-C-methyl-D-erythritol + diphosphate. Its pathway is isoprenoid biosynthesis; isopentenyl diphosphate biosynthesis via DXP pathway; isopentenyl diphosphate from 1-deoxy-D-xylulose 5-phosphate: step 2/6. Its function is as follows. Catalyzes the formation of 4-diphosphocytidyl-2-C-methyl-D-erythritol from CTP and 2-C-methyl-D-erythritol 4-phosphate (MEP). The polypeptide is 2-C-methyl-D-erythritol 4-phosphate cytidylyltransferase (Caldicellulosiruptor saccharolyticus (strain ATCC 43494 / DSM 8903 / Tp8T 6331)).